Reading from the N-terminus, the 95-residue chain is Aspartyl/glutamyl-tRNA(Asn/Gln) amidotransferase subunit C (95 aa).

It belongs to the GatC family. Heterotrimer of A, B and C subunits.

The enzyme catalyses L-glutamyl-tRNA(Gln) + L-glutamine + ATP + H2O = L-glutaminyl-tRNA(Gln) + L-glutamate + ADP + phosphate + H(+). The catalysed reaction is L-aspartyl-tRNA(Asn) + L-glutamine + ATP + H2O = L-asparaginyl-tRNA(Asn) + L-glutamate + ADP + phosphate + 2 H(+). Allows the formation of correctly charged Asn-tRNA(Asn) or Gln-tRNA(Gln) through the transamidation of misacylated Asp-tRNA(Asn) or Glu-tRNA(Gln) in organisms which lack either or both of asparaginyl-tRNA or glutaminyl-tRNA synthetases. The reaction takes place in the presence of glutamine and ATP through an activated phospho-Asp-tRNA(Asn) or phospho-Glu-tRNA(Gln). This is Aspartyl/glutamyl-tRNA(Asn/Gln) amidotransferase subunit C from Shouchella clausii (strain KSM-K16) (Alkalihalobacillus clausii).